The sequence spans 371 residues: Methionine import ATP-binding protein MetN (371 aa).

In terms of domain architecture, ABC transporter spans 29 to 270 (IRIEGVRKVY…PRHEVTRRFV (242 aa)). 67–74 (GRSGAGKS) contacts ATP.

The protein belongs to the ABC transporter superfamily. Methionine importer (TC 3.A.1.24) family. As to quaternary structure, the complex is composed of two ATP-binding proteins (MetN), two transmembrane proteins (MetI) and a solute-binding protein (MetQ).

Its subcellular location is the cell inner membrane. The catalysed reaction is L-methionine(out) + ATP + H2O = L-methionine(in) + ADP + phosphate + H(+). The enzyme catalyses D-methionine(out) + ATP + H2O = D-methionine(in) + ADP + phosphate + H(+). In terms of biological role, part of the ABC transporter complex MetNIQ involved in methionine import. Responsible for energy coupling to the transport system. The protein is Methionine import ATP-binding protein MetN of Rhodopseudomonas palustris (strain BisA53).